Reading from the N-terminus, the 672-residue chain is Leucine-rich repeat receptor-like protein kinase PXC1 (672 aa).

The first 21 residues, 1 to 21, serve as a signal peptide directing secretion; sequence MAAKPLLLPLLLLLHLSITLA. The Extracellular portion of the chain corresponds to 22-269; sequence QNDTNALTLF…IHSHRGIKPG (248 aa). Asn23, Asn44, and Asn101 each carry an N-linked (GlcNAc...) asparagine glycan. One copy of the LRR 1 repeat lies at 87-110; it reads LDQLRLLDLHDNRLNGTVSPLTNC. Lys111 participates in a covalent cross-link: Glycyl lysine isopeptide (Lys-Gly) (interchain with G-Cter in ubiquitin). 4 LRR repeats span residues 112–134, 135–158, 160–181, and 182–205; these read NLRL…ISFL, KRMI…ILGF, RVLT…FSQM, and KSLL…VVKK. Asn188 and Asn197 each carry an N-linked (GlcNAc...) asparagine glycan. Positions 233-249 are enriched in polar residues; it reads ESSNTDQIVPSNPTSIP. The interval 233-254 is disordered; the sequence is ESSNTDQIVPSNPTSIPHSPVS. The chain crosses the membrane as a helical span at residues 270–290; that stretch reads IIAAVIGGCVAVIVLVSFGFA. Topologically, residues 291 to 672 are cytoplasmic; it reads FCCGRLDRNG…MSPSLATTDG (382 aa). The tract at residues 300–333 is disordered; that stretch reads GERSKSGSVETGFVGGGEGKRRSSYGEGGESDAT. A Protein kinase domain is found at 357 to 645; that stretch reads KASAEMLGKG…AEVVKMVEEI (289 aa). ATP-binding positions include 363–371 and Lys386; that span reads LGKGSLGTV. Residues 650 to 672 form a disordered region; that stretch reads SPVGEDFDESRNSMSPSLATTDG. Over residues 661–672 the composition is skewed to polar residues; that stretch reads NSMSPSLATTDG.

The protein belongs to the protein kinase superfamily. Ser/Thr protein kinase family. Expressed in the vascular strands of cotyledons, the shoot apex, hypocotyls, roots, leaves, stems and flowers.

The protein resides in the cell membrane. Its function is as follows. Leucine-rich repeat receptor-like protein kinase involved in secondary cell wall formation in xylem fibers. May play a role in a regulatory network which also incorporates the TDR/PXY signaling pathway and regulates the maturation of interfascicular fiber cells. May promote the initiation of secondary cell wall deposition during the procedure of cell expansion. This is Leucine-rich repeat receptor-like protein kinase PXC1 from Arabidopsis thaliana (Mouse-ear cress).